Reading from the N-terminus, the 65-residue chain is Disintegrin CC8B (65 aa).

The Disintegrin domain maps to 1 to 65 (NSAHPCCDPV…DCPRNPWHKS (65 aa)). 4 cysteine pairs are disulfide-bonded: Cys-6-Cys-29, Cys-20-Cys-26, Cys-25-Cys-50, and Cys-38-Cys-57. Residues 42–44 (WGD) carry the Cell attachment site; atypical (WGD) motif.

This sequence belongs to the disintegrin family. Dimeric disintegrin subfamily. Heterodimer with CC8A; disulfide-linked. In terms of tissue distribution, expressed by the venom gland.

The protein resides in the secreted. Functionally, inhibits integrins alpha-IIb/beta-3 (ITGA2B/ITGB3), alpha-V/beta-3 (ITGAV/ITGB3), and alpha-5/beta-1 (ITGA5/ITGB1). In Cerastes cerastes (Horned desert viper), this protein is Disintegrin CC8B.